The sequence spans 434 residues: Trigger factor (434 aa).

The PPIase FKBP-type domain occupies 160–245 (GDKVKMNFVG…LTEVLAANLP (86 aa)).

The protein belongs to the FKBP-type PPIase family. Tig subfamily.

It localises to the cytoplasm. The enzyme catalyses [protein]-peptidylproline (omega=180) = [protein]-peptidylproline (omega=0). Functionally, involved in protein export. Acts as a chaperone by maintaining the newly synthesized protein in an open conformation. Functions as a peptidyl-prolyl cis-trans isomerase. The polypeptide is Trigger factor (Shewanella sp. (strain ANA-3)).